A 481-amino-acid polypeptide reads, in one-letter code: Glycogen synthase (481 aa).

Residue lysine 15 participates in ADP-alpha-D-glucose binding.

This sequence belongs to the glycosyltransferase 1 family. Bacterial/plant glycogen synthase subfamily.

The enzyme catalyses [(1-&gt;4)-alpha-D-glucosyl](n) + ADP-alpha-D-glucose = [(1-&gt;4)-alpha-D-glucosyl](n+1) + ADP + H(+). The protein operates within glycan biosynthesis; glycogen biosynthesis. Functionally, synthesizes alpha-1,4-glucan chains using ADP-glucose. The polypeptide is Glycogen synthase (Mesorhizobium japonicum (strain LMG 29417 / CECT 9101 / MAFF 303099) (Mesorhizobium loti (strain MAFF 303099))).